The primary structure comprises 103 residues: Matrix Gla protein (103 aa).

The N-terminal stretch at 1–19 (MKSLLLLSILAALAVAALC) is a signal peptide. A 4-carboxyglutamate; partial modification is found at E21. 3 positions are modified to phosphoserine: S22, S25, and S28. One can recognise a Gla domain in the interval 51 to 97 (RAKAQERIRELNKPQYELNREACDDFKLCERYAMVYGYNAAYDRYFR). 4-carboxyglutamate is present on residues E56, E60, E67, and E71. Cysteines 73 and 79 form a disulfide. Residues 99–102 (RRGA) constitute a propeptide, removed in short form; probably by carboxypeptidase N. A propeptide (removed in long form; probably by carboxypeptidase H) is located at residue K103.

This sequence belongs to the osteocalcin/matrix Gla protein family. Requires vitamin K-dependent gamma-carboxylation for its function.

It is found in the secreted. Associates with the organic matrix of bone and cartilage. Thought to act as an inhibitor of bone formation. The chain is Matrix Gla protein (MGP) from Bos taurus (Bovine).